The primary structure comprises 485 residues: UDP-N-acetylmuramate--L-alanine ligase (485 aa).

120–126 (GSHGKTT) contributes to the ATP binding site.

It belongs to the MurCDEF family.

It is found in the cytoplasm. The catalysed reaction is UDP-N-acetyl-alpha-D-muramate + L-alanine + ATP = UDP-N-acetyl-alpha-D-muramoyl-L-alanine + ADP + phosphate + H(+). It functions in the pathway cell wall biogenesis; peptidoglycan biosynthesis. Functionally, cell wall formation. The protein is UDP-N-acetylmuramate--L-alanine ligase of Rickettsia africae (strain ESF-5).